The primary structure comprises 134 residues: Complexin-1 (134 aa).

Disordered stretches follow at residues 1 to 60 and 74 to 113; these read MEFV…AERE and KKEE…EEED. Residues 15–60 show a composition bias toward basic and acidic residues; that stretch reads DMGKMLGGDEEKDPDAAKKEEERQEALRQAEEERKAKYAKMEAERE. Residues 29–69 are a coiled coil; sequence DAAKKEEERQEALRQAEEERKAKYAKMEAEREAVRQGIRDK. Residues 48-70 are interaction with the SNARE complex; that stretch reads RKAKYAKMEAEREAVRQGIRDKY.

This sequence belongs to the complexin/synaphin family. As to quaternary structure, binds to the SNARE core complex containing SNAP25, VAMP2 and STX1A. In terms of tissue distribution, nervous system. In hippocampus and cerebellum, expressed mainly by inhibitory neurons. Overexpressed in substantia nigra from patients with Parkinson disease.

The protein resides in the cytoplasm. It is found in the cytosol. It localises to the perikaryon. The protein localises to the presynapse. In terms of biological role, positively regulates a late step in exocytosis of various cytoplasmic vesicles, such as synaptic vesicles and other secretory vesicles. Organizes the SNAREs into a cross-linked zigzag topology that, when interposed between the vesicle and plasma membranes, is incompatible with fusion, thereby preventing SNAREs from releasing neurotransmitters until an action potential arrives at the synapse. Also involved in glucose-induced secretion of insulin by pancreatic beta-cells. Essential for motor behavior. This chain is Complexin-1 (CPLX1), found in Homo sapiens (Human).